Reading from the N-terminus, the 249-residue chain is Selenoprotein BthD (249 aa).

Positions 1–22 (MPPKRNKKAEAPIAERDAGEEL) are disordered. A compositionally biased stretch (basic and acidic residues) spans 8–19 (KAEAPIAERDAG). Positions 34–37 (CRSU) form a cross-link, cysteinyl-selenocysteine (Cys-Sec); redox-active. Residue Sec37 is a non-standard amino acid, selenocysteine. The interval 122 to 249 (QQESKEQTNT…EATAGAKRRR (128 aa)) is disordered. At Ser147 the chain carries Phosphoserine. Residues 175 to 198 (EQKSEEEPTQVDSKEAKQSKELVK) show a composition bias toward basic and acidic residues. Residues 199–210 (TKRQPKAQKKQA) show a composition bias toward basic residues.

As to expression, expressed in the developing salivary gland at late stages of embryogenesis. Also expressed in brain, neuroblast and wing disk.

Its subcellular location is the cytoplasm. It is found in the secreted. May be involved in a redox-related process. Required for survival and specifically for salivary gland morphogenesis. The chain is Selenoprotein BthD (BthD) from Drosophila melanogaster (Fruit fly).